The following is a 345-amino-acid chain: Molybdate/tungstate-binding protein WtpA (345 aa).

The signal sequence occupies residues 1–27 (MREGGVMKKRLLALIVAFAVLTAGCLG). Residues 41–42 (GS), serine 75, 160–162 (DPC), glutamate 218, and tyrosine 236 each bind molybdate. Tungstate contacts are provided by residues 41-42 (GS), serine 75, 160-162 (DPC), glutamate 218, and tyrosine 236.

This sequence belongs to the bacterial solute-binding protein 1 family. WtpA subfamily. As to quaternary structure, monomer. The complex is composed of two ATP-binding proteins (WtpC), two transmembrane proteins (WtpB) and a solute-binding protein (WtpA).

The protein localises to the cell membrane. Functionally, part of the ABC transporter complex WtpABC involved in molybdate/tungstate import. Binds tungstate and molybdate, with a preference for tungstate. The sequence is that of Molybdate/tungstate-binding protein WtpA from Pyrococcus furiosus (strain ATCC 43587 / DSM 3638 / JCM 8422 / Vc1).